A 243-amino-acid polypeptide reads, in one-letter code: Leucyl/phenylalanyl-tRNA--protein transferase (243 aa).

It belongs to the L/F-transferase family.

Its subcellular location is the cytoplasm. The catalysed reaction is N-terminal L-lysyl-[protein] + L-leucyl-tRNA(Leu) = N-terminal L-leucyl-L-lysyl-[protein] + tRNA(Leu) + H(+). The enzyme catalyses N-terminal L-arginyl-[protein] + L-leucyl-tRNA(Leu) = N-terminal L-leucyl-L-arginyl-[protein] + tRNA(Leu) + H(+). It carries out the reaction L-phenylalanyl-tRNA(Phe) + an N-terminal L-alpha-aminoacyl-[protein] = an N-terminal L-phenylalanyl-L-alpha-aminoacyl-[protein] + tRNA(Phe). Its function is as follows. Functions in the N-end rule pathway of protein degradation where it conjugates Leu, Phe and, less efficiently, Met from aminoacyl-tRNAs to the N-termini of proteins containing an N-terminal arginine or lysine. This Xylella fastidiosa (strain 9a5c) protein is Leucyl/phenylalanyl-tRNA--protein transferase.